Consider the following 107-residue polypeptide: Ig kappa chain V-VI region NQ6-8.3.1 (107 aa).

Positions 1–23 (QIVLTQSPAIMSASPGQKVTMTC) are framework-1. A disulfide bond links C23 and C87. The complementarity-determining-1 stretch occupies residues 24–33 (SASSSVSYMH). The framework-2 stretch occupies residues 34-48 (WYQQKSGTSPKRWIY). Residues 49-55 (DTSKLAS) are complementarity-determining-2. Residues 56–87 (GXPARFSGSGSATSYSLTITSMQAEDAATYYC) are framework-3. Residues 88–96 (QQWSSNPLT) form a complementarity-determining-3 region. The interval 97 to 106 (FGAGTKLELK) is framework-4.

In terms of biological role, anti-2-phenyl oxazolone (PHOX) Antibody. The chain is Ig kappa chain V-VI region NQ6-8.3.1 from Mus musculus (Mouse).